Reading from the N-terminus, the 118-residue chain is Small ribosomal subunit protein uS13 (118 aa).

A disordered region spans residues 94–118 (GLPLRGQRTRTNARTRKGPRKAIRK).

It belongs to the universal ribosomal protein uS13 family. As to quaternary structure, part of the 30S ribosomal subunit. Forms a loose heterodimer with protein S19. Forms two bridges to the 50S subunit in the 70S ribosome.

Its function is as follows. Located at the top of the head of the 30S subunit, it contacts several helices of the 16S rRNA. In the 70S ribosome it contacts the 23S rRNA (bridge B1a) and protein L5 of the 50S subunit (bridge B1b), connecting the 2 subunits; these bridges are implicated in subunit movement. Contacts the tRNAs in the A and P-sites. The protein is Small ribosomal subunit protein uS13 of Stenotrophomonas maltophilia (strain R551-3).